We begin with the raw amino-acid sequence, 352 residues long: Molybdenum import ATP-binding protein ModC (352 aa).

The ABC transporter domain maps to 1–229; it reads MLELNFSQTL…SVMNPWLPKE (229 aa). ATP is bound at residue 31–38; it reads GVSGAGKT. The Mop domain maps to 289 to 352; sequence QTSIRNVLRA…AQIKSVSITA (64 aa).

This sequence belongs to the ABC transporter superfamily. Molybdate importer (TC 3.A.1.8) family. In terms of assembly, the complex is composed of two ATP-binding proteins (ModC), two transmembrane proteins (ModB) and a solute-binding protein (ModA).

The protein localises to the cell inner membrane. It carries out the reaction molybdate(out) + ATP + H2O = molybdate(in) + ADP + phosphate + H(+). Part of the ABC transporter complex ModABC involved in molybdenum import. Responsible for energy coupling to the transport system. This chain is Molybdenum import ATP-binding protein ModC, found in Escherichia coli (strain K12).